The chain runs to 130 residues: Large ribosomal subunit protein bL17 (130 aa).

This sequence belongs to the bacterial ribosomal protein bL17 family. As to quaternary structure, part of the 50S ribosomal subunit. Contacts protein L32.

The protein is Large ribosomal subunit protein bL17 of Shewanella halifaxensis (strain HAW-EB4).